Consider the following 683-residue polypeptide: Dixin (683 aa).

Leu-2 carries N-myristoyl glycine lipidation. The region spanning 20–127 (EQQLQAYVAW…LVLALAAHFK (108 aa)) is the Calponin-homology (CH) domain. The tract at residues 127–300 (KPGSSRTVNQ…LEKEMEEAKK (174 aa)) is actin-binding. A Phosphoserine modification is found at Ser-186. The segment at 207–235 (GQQRSPSESSCSSLTSPSPIHSAKSESII) is disordered. The segment covering 211-228 (SPSESSCSSLTSPSPIHS) has biased composition (low complexity). A Phosphoserine modification is found at Ser-231. The stretch at 279–452 (SWEEQLLEQQ…EALRKLSDVS (174 aa)) forms a coiled coil. Positions 482-492 (NYNSHNSQSNG) are enriched in polar residues. Disordered stretches follow at residues 482–509 (NYNSHNSQSNGFLLPTAGKGATSVSNRG) and 556–594 (TQKKQERKVRVKSPRTQVGSEYRESWPPNSKLPHSQSSP). A Phosphoserine modification is found at Ser-590. In terms of domain architecture, DIX spans 600-680 (CTKVLYFTDR…KIVAWVEEDH (81 aa)).

The protein belongs to the DIXDC1 family. In terms of assembly, isoform 1 but not isoform 2 binds filamentous actin. Interacts with the complex composed of DVL2 and Rac. Interacts with AXIN1; competes with MAP3K1. Interacts with MAP3K4 preventing MAP3K4 interaction with AXIN1. Directly interacts (via DIX domain) with DVL2 (via DIX domain). Interacts with gamma-tubulin. Post-translationally, phosphorylated on tyrosine and serine residues. Polyubiquitinated, leading to its proteasomal degradation. WNT3A signaling increases DIXDC1 protein levels by inhibiting its ubiquitination and subsequent degradation. In terms of tissue distribution, ubiquitously expressed with higher expression in cardiac and skeletal muscles.

The protein localises to the cell junction. The protein resides in the focal adhesion. It localises to the cytoplasm. Its subcellular location is the cytoskeleton. It is found in the stress fiber. Its function is as follows. Positive effector of the Wnt signaling pathway; activates WNT3A signaling via DVL2. Regulates JNK activation by AXIN1 and DVL2. The chain is Dixin (DIXDC1) from Homo sapiens (Human).